Consider the following 351-residue polypeptide: UDP-N-acetylglucosamine--N-acetylmuramyl-(pentapeptide) pyrophosphoryl-undecaprenol N-acetylglucosamine transferase (351 aa).

UDP-N-acetyl-alpha-D-glucosamine-binding positions include 13–15 (TGG), asparagine 125, arginine 161, serine 189, isoleucine 241, 260–265 (ALTVCE), and glutamine 285.

It belongs to the glycosyltransferase 28 family. MurG subfamily.

It localises to the cell inner membrane. It catalyses the reaction di-trans,octa-cis-undecaprenyl diphospho-N-acetyl-alpha-D-muramoyl-L-alanyl-D-glutamyl-meso-2,6-diaminopimeloyl-D-alanyl-D-alanine + UDP-N-acetyl-alpha-D-glucosamine = di-trans,octa-cis-undecaprenyl diphospho-[N-acetyl-alpha-D-glucosaminyl-(1-&gt;4)]-N-acetyl-alpha-D-muramoyl-L-alanyl-D-glutamyl-meso-2,6-diaminopimeloyl-D-alanyl-D-alanine + UDP + H(+). Its pathway is cell wall biogenesis; peptidoglycan biosynthesis. Cell wall formation. Catalyzes the transfer of a GlcNAc subunit on undecaprenyl-pyrophosphoryl-MurNAc-pentapeptide (lipid intermediate I) to form undecaprenyl-pyrophosphoryl-MurNAc-(pentapeptide)GlcNAc (lipid intermediate II). This chain is UDP-N-acetylglucosamine--N-acetylmuramyl-(pentapeptide) pyrophosphoryl-undecaprenol N-acetylglucosamine transferase, found in Haemophilus influenzae (strain 86-028NP).